We begin with the raw amino-acid sequence, 359 residues long: Serum paraoxonase/arylesterase 1 (359 aa).

C42 and C353 form a disulfide bridge. N-linked (GlcNAc...) asparagine glycosylation occurs at N50. Residues E53 and D54 each coordinate Ca(2+). Residue H115 is the Proton acceptor of the active site. The Ca(2+) site is built by I117, N168, D169, and N224. N-linked (GlcNAc...) asparagine glycosylation occurs at N253. Ca(2+) is bound by residues D269 and N270. N-linked (GlcNAc...) asparagine glycosylation is found at N270 and N324.

This sequence belongs to the paraoxonase family. Homodimer. Interacts with CLU. It depends on Ca(2+) as a cofactor. Glycosylated. In terms of processing, the signal sequence is not cleaved. In terms of tissue distribution, plasma. Associated with HDL.

Its subcellular location is the secreted. It localises to the extracellular space. It carries out the reaction a phenyl acetate + H2O = a phenol + acetate + H(+). The catalysed reaction is An aryl dialkyl phosphate + H2O = dialkyl phosphate + an aryl alcohol.. It catalyses the reaction an N-acyl-L-homoserine lactone + H2O = an N-acyl-L-homoserine + H(+). In terms of biological role, hydrolyzes the toxic metabolites of a variety of organophosphorus insecticides. Capable of hydrolyzing a broad spectrum of organophosphate substrates and lactones, and a number of aromatic carboxylic acid esters. Mediates an enzymatic protection of low density lipoproteins against oxidative modification. This is Serum paraoxonase/arylesterase 1 (PON1) from Oryctolagus cuniculus (Rabbit).